The primary structure comprises 980 residues: MSVCTLSVPVSSISPGRRCSTFGDAGILGCVSINSNTDEDDVVEGKMVAEGANKETKLPAKKKRKKGLRIKGKRRRKKLILAKKFSKDLGSGRPVADAPASLASGAPEQDEESLFEGNIEKQIYLPSTRAKTSIVWHFFHVDPQYTWRAICNLCEKSVSRGKPGSHLGTSTLQRHLQARHSPHWTRANKFGVTNGEEDFTLDLSLSPPSPGSNGSFEYIPTDSVDENRMGKKRDKSASDALRAKRGRFLIKSNIVKHALIPGTRAKTSAVWNFFYTDPQHISRAVCNICKRSVSRGRPGSHLGTSTLQRHLQATHPIHWAVANKDSGAIGNGLDETETESSDLLNDTMPGEKSSGSQDLTAEDLSDSDTDEPPCLEVENRSESPIPVADQDNPVHAQERETTTHCENAAANQISQAVIQMIVEDLHPYNYFSTPAFQRFLQIVAPDYRLPSETYFFTKAVPQLYDSVREKIFLTLENVQSQKIHLTADIWTHDPSTDYFIVTVHWVSLETASSPSNGGTPNFRKWAVLCVTGLAKDCLITNILQELNDQIGLWLSPNFLTPSFIVSDNSSNVVHAIKGGGFTHVPCFLHCLNIVIQDFFCEHKSIENMLVAARKTCHHFSHSVKARQILQEFQNDHQLPWKNLKQDETGHWISTFYMLKWLLEHCYSVHHSLGRASGVVLTSLQWTLMTYVCDILKPFEEATQRVSVKTTGLNQVLPLIHHLLFSLQRLREDFQVRGITQALNLVDSLSLKLESDALLSAMLKSKHCILATLLDPCFKNSLEDFFPQGADLETYKQILAEEVCNYMESSPGACQISSSETSGPLVRLGTDSFTSIKEGTSSAGSLDSSAAGSVAVGSKSSLLPAAVAVVDEYFKEKYSELSGGDDPLVYWQRKVSIWPALTQVAIQYLSCPMCSWQSECMFTTNSHFHPKQIMNMDFDNIEQLIFLKMNLENVNYDYSTLILSWDPENKAVQSNEKEILP.

Residues 1–89 (MSVCTLSVPV…ILAKKFSKDL (89 aa)) form a required for nucleolar localization region. The tract at residues 89 to 109 (LGSGRPVADAPASLASGAPEQ) is disordered. A BED-type 1 zinc finger spans residues 130 to 187 (AKTSIVWHFFHVDPQYTWRAICNLCEKSVSRGKPGSHLGTSTLQRHLQARHSPHWTRA). Positions 151, 154, 175, and 180 each coordinate Zn(2+). The tract at residues 201–239 (LDLSLSPPSPGSNGSFEYIPTDSVDENRMGKKRDKSASD) is disordered. Low complexity predominate over residues 203-215 (LSLSPPSPGSNGS). A BED-type 2 zinc finger spans residues 265-322 (AKTSAVWNFFYTDPQHISRAVCNICKRSVSRGRPGSHLGTSTLQRHLQATHPIHWAVA). The Zn(2+) site is built by Cys-286, Cys-289, His-310, and His-315. The interval 328-397 (AIGNGLDETE…ADQDNPVHAQ (70 aa)) is disordered. Residues 360–373 (TAEDLSDSDTDEPP) are compositionally biased toward acidic residues. Position 383 is a phosphoserine (Ser-383). The segment at 868–950 (VVDEYFKEKY…EQLIFLKMNL (83 aa)) is HATC (Hobo-Ac-Tam3) domain.

In terms of tissue distribution, expressed in pancreatic islet cells and weakly expressed in surrounding exocrine tissues (at protein level). Expressed in muscle and brain (at protein level). Shows broad tissue distribution with expression detected in brain, stomach, intestine, heart, kidney, liver, lung, skeletal muscle, ovary, spleen, tail and testis.

It localises to the nucleus. The protein localises to the nucleolus. The protein resides in the cytoplasm. In terms of biological role, transcriptional repressor which binds to the consensus sequence 5'-GCTCGC-3', transcription regulation may be tissue-specific. Regulates the expression of target genes such as: IGF2, PGAP6/TMEM8, ENHO, and PIANP. Acts as a transcriptional repressor of growth factor IGF2, thereby negatively regulating postnatal growth of muscles and internal organs, especially in females. Negatively regulates myoblast differentiation and myoblast mitochondrial activity via its regulation of IGF2 transcription. Negatively regulates the cell cycle of myoblasts, potentially via transcriptional regulation of the E2F family of transcription factors such as: E2F1 and E2F2. Positively regulates the cell cycle and survival of pancreatic beta cells. Binds to the CDH2 gene and may directly repress CDH2 transcription. Probably by controlling CDH2 expression, regulates pancreatic beta cell adhesion, and formation of cell-to-cell junctions between pancreatic beta cells and neural crest stem cells. May also play a role in embryonic beta cell differentiation. May play a role in insulin sensitivity and glucose clearance. The sequence is that of Zinc finger BED domain-containing protein 6 from Mus musculus (Mouse).